A 375-amino-acid chain; its full sequence is Platelet-derived growth factor receptor-like protein (375 aa).

Residues 1–21 form the signal peptide; it reads MKFWLLLGLLLLHEALEDVAG. The segment at 20–63 is disordered; the sequence is AGQHSPKNKRPKEQGENRIKPTNKKAKPKIPKVKDRDSTDSTAK. Residues 40-50 are compositionally biased toward basic residues; it reads PTNKKAKPKIP. One can recognise an Ig-like C2-type 1 domain in the interval 47-159; sequence PKIPKVKDRD…GYICRRDEAK (113 aa). Cysteines 96 and 143 form a disulfide. N-linked (GlcNAc...) asparagine glycosylation occurs at Asn-219. Residues 272–375 form the Ig-like C2-type 2 domain; it reads PSTTILASSN…TTVATTVEFS (104 aa). A disulfide bridge connects residues Cys-293 and Cys-357.

As to quaternary structure, forms a complex composed of PDGFRL, TNK2 and GRB2.

It localises to the secreted. In Mus musculus (Mouse), this protein is Platelet-derived growth factor receptor-like protein (Pdgfrl).